Reading from the N-terminus, the 363-residue chain is MRVSDFNFDLPDELIARYPKTDRVSCRLLQLNGENGEIFHRTFSDVLDLIDEGDLLIFNNTRVIPARMFGRKASGGKIEVLVERMLDEHRFLAHIRSSKSPKEGAELFLGEDKLGENNGIKAVMKARHSSLFEVELSDKSTALLDVLQTIGHMPLPPYIDRPDEEADKECYQTVYSKVPGAVAAPTAGLHFDENLLEKLKAKGVNFEFVTLHVGAGTFQPVRVENIEDHVMHAEYVEVSQEVCNAIIATKKAGKRVIAVGTTSVRSIESAALSAEEFGNPDLIEPYFSDTSIFIYPGKKFRVVDCLITNFHLPESTLIMLVSAFAGYKNTMNAYKQAVQEKYRFFSYGDAMFINKNSNVRELE.

Belongs to the QueA family. In terms of assembly, monomer.

Its subcellular location is the cytoplasm. It catalyses the reaction 7-aminomethyl-7-carbaguanosine(34) in tRNA + S-adenosyl-L-methionine = epoxyqueuosine(34) in tRNA + adenine + L-methionine + 2 H(+). The protein operates within tRNA modification; tRNA-queuosine biosynthesis. Functionally, transfers and isomerizes the ribose moiety from AdoMet to the 7-aminomethyl group of 7-deazaguanine (preQ1-tRNA) to give epoxyqueuosine (oQ-tRNA). The protein is S-adenosylmethionine:tRNA ribosyltransferase-isomerase of Haemophilus influenzae (strain PittEE).